The chain runs to 322 residues: RNA pseudouridine synthase 1 (322 aa).

The active site involves Asp120.

Belongs to the pseudouridine synthase RluA family.

It catalyses the reaction a uridine in RNA = a pseudouridine in RNA. This is RNA pseudouridine synthase 1 from Arabidopsis thaliana (Mouse-ear cress).